A 286-amino-acid chain; its full sequence is Ribonuclease H1 (286 aa).

The segment covering 101–115 has biased composition (basic and acidic residues); the sequence is EPLDGDGHESAEPYA. The segment at 101-127 is disordered; sequence EPLDGDGHESAEPYAKHMKPSVEPAPP. One can recognise an RNase H type-1 domain in the interval 136 to 282; sequence MGDFVVVYTD…ADRLAREGAK (147 aa). The Mg(2+) site is built by aspartate 145, glutamate 186, aspartate 210, and aspartate 274.

The protein belongs to the RNase H family. In terms of assembly, monomer. Mg(2+) is required as a cofactor. As to expression, ubiquitous.

The protein resides in the cytoplasm. The enzyme catalyses Endonucleolytic cleavage to 5'-phosphomonoester.. With respect to regulation, in the presence of magnesium, manganese is inhibitory. Functionally, endonuclease that specifically degrades the RNA of RNA-DNA hybrids. Plays a role in RNA polymerase II (RNAp II) transcription termination by degrading R-loop RNA-DNA hybrid formation at G-rich pause sites located downstream of the poly(A) site and behind the elongating RNAp II. In Homo sapiens (Human), this protein is Ribonuclease H1 (RNASEH1).